The following is a 57-amino-acid chain: VVFCDAGITCPSGTTCCRSPFGVWYCCPFLMGQCCRDGRHCCRHGYHCDSTSTLCLR.

2 cysteine pairs are disulfide-bonded: Cys4-Cys16 and Cys10-Cys26.

The protein belongs to the granulin family. In terms of processing, granulins are disulfide bridged. Ubiquitous.

It localises to the secreted. Granulins have possible cytokine-like activity. They may play a role in inflammation, wound repair, and tissue remodeling. In Cyprinus carpio (Common carp), this protein is Granulin-3.